We begin with the raw amino-acid sequence, 412 residues long: Peptidase T (412 aa).

Residue His84 participates in Zn(2+) binding. Asp86 is an active-site residue. Asp146 contacts Zn(2+). The active-site Proton acceptor is the Glu179. Zn(2+) contacts are provided by Glu180, Asp202, and His385.

This sequence belongs to the peptidase M20B family. It depends on Zn(2+) as a cofactor.

The protein resides in the cytoplasm. It carries out the reaction Release of the N-terminal residue from a tripeptide.. Cleaves the N-terminal amino acid of tripeptides. The polypeptide is Peptidase T (Haemophilus influenzae (strain PittGG)).